Consider the following 492-residue polypeptide: KRAB-A domain-containing protein 2 (492 aa).

The KRAB domain occupies 36-117; it reads LFQEATAFEN…MREKFLMSVT (82 aa). Residue serine 115 is modified to Phosphoserine. Threonine 117 carries the phosphothreonine modification. In terms of domain architecture, Integrase catalytic spans 247–415; sequence RGLAPKPMTF…SPFEAMFGYK (169 aa). A coiled-coil region spans residues 427-457; it reads RETVATLQTEEELEIAEEQLENSLWIRQEER. Positions 455-465 are enriched in basic and acidic residues; sequence EERAEIGADRS. The interval 455–492 is disordered; it reads EERAEIGADRSDMDDDMDPTPEASEPSTSQGTSGLLCW. Over residues 479-492 the composition is skewed to polar residues; the sequence is EPSTSQGTSGLLCW.

The sequence is that of KRAB-A domain-containing protein 2 (KRBA2) from Homo sapiens (Human).